The primary structure comprises 202 residues: Homeobox protein ceh-13 (202 aa).

2 disordered regions span residues 60 to 83 (PATASGLSPPASRSSNSSAELPTG) and 166 to 202 (RMKEKKREKEKAFLARNTWESNSPTSSCSGEDVKNFK). A compositionally biased stretch (low complexity) spans 63–81 (ASGLSPPASRSSNSSAELP). Positions 114–173 (NGTNRTNFTTHQLTELEKEFHTAKYVNRTRRTEIASNLKLQEAQVKIWFQNRRMKEKKRE) form a DNA-binding region, homeobox. The span at 183–194 (TWESNSPTSSCS) shows a compositional bias: polar residues.

It localises to the nucleus. In Caenorhabditis elegans, this protein is Homeobox protein ceh-13 (ceh-13).